Here is a 238-residue protein sequence, read N- to C-terminus: Cysteine-rich venom protein pseudechetoxin (238 aa).

Residues 1–19 form the signal peptide; that stretch reads MIAFIVLLSLAAVLQQSSG. A propeptide spanning residues 20-27 is cleaved from the precursor; the sequence is TADFASES. Positions 38 to 164 constitute an SCP domain; that stretch reads VDKHNALRRS…SSKYLYVCQY (127 aa). Thr-51 and Ser-106 together coordinate Zn(2+). Disulfide bonds link Cys-75-Cys-153, Cys-92-Cys-165, Cys-148-Cys-162, Cys-184-Cys-191, Cys-187-Cys-196, Cys-200-Cys-233, Cys-209-Cys-227, and Cys-218-Cys-231. The ShKT domain occupies 200–233; the sequence is CKRNNDFSNCKSLAKKSKCQTEWIKKKCPASCFC.

Expressed by the venom gland.

It localises to the secreted. Blocks olfactory (CNGA2) and retinal (CNGA1) cyclic nucleotide-gated (CNG) ion channel currents. Does not inhibit retinal (CNGA3) currents. It forms high-affinity contacts with the pore turret region and most likely inhibits CNG channel current by blocking the external entrance to the transmembrane pore. Is really more potent that Pseudecin. Does not affect neither depolarization- nor caffeine-induced contraction arterial smooth muscle. This is Cysteine-rich venom protein pseudechetoxin from Pseudechis australis (Mulga snake).